A 366-amino-acid chain; its full sequence is Holliday junction branch migration complex subunit RuvB (366 aa).

The segment at 3-183 (ADGLVSAAAS…FGFTAHLDFY (181 aa)) is large ATPase domain (RuvB-L). Residues L22, R23, G64, K67, T68, S69, 130–132 (EDF), R173, Y183, and R220 each bind ATP. T68 provides a ligand contact to Mg(2+). Positions 184–254 (APDELARVLT…VARAALRIYD (71 aa)) are small ATPAse domain (RuvB-S). The segment at 257 to 366 (GLGLDRLDRA…PEDGLHPGGG (110 aa)) is head domain (RuvB-H). The DNA site is built by R312 and R317.

It belongs to the RuvB family. Homohexamer. Forms an RuvA(8)-RuvB(12)-Holliday junction (HJ) complex. HJ DNA is sandwiched between 2 RuvA tetramers; dsDNA enters through RuvA and exits via RuvB. An RuvB hexamer assembles on each DNA strand where it exits the tetramer. Each RuvB hexamer is contacted by two RuvA subunits (via domain III) on 2 adjacent RuvB subunits; this complex drives branch migration. In the full resolvosome a probable DNA-RuvA(4)-RuvB(12)-RuvC(2) complex forms which resolves the HJ.

It is found in the cytoplasm. The catalysed reaction is ATP + H2O = ADP + phosphate + H(+). The RuvA-RuvB-RuvC complex processes Holliday junction (HJ) DNA during genetic recombination and DNA repair, while the RuvA-RuvB complex plays an important role in the rescue of blocked DNA replication forks via replication fork reversal (RFR). RuvA specifically binds to HJ cruciform DNA, conferring on it an open structure. The RuvB hexamer acts as an ATP-dependent pump, pulling dsDNA into and through the RuvAB complex. RuvB forms 2 homohexamers on either side of HJ DNA bound by 1 or 2 RuvA tetramers; 4 subunits per hexamer contact DNA at a time. Coordinated motions by a converter formed by DNA-disengaged RuvB subunits stimulates ATP hydrolysis and nucleotide exchange. Immobilization of the converter enables RuvB to convert the ATP-contained energy into a lever motion, pulling 2 nucleotides of DNA out of the RuvA tetramer per ATP hydrolyzed, thus driving DNA branch migration. The RuvB motors rotate together with the DNA substrate, which together with the progressing nucleotide cycle form the mechanistic basis for DNA recombination by continuous HJ branch migration. Branch migration allows RuvC to scan DNA until it finds its consensus sequence, where it cleaves and resolves cruciform DNA. The sequence is that of Holliday junction branch migration complex subunit RuvB from Frankia alni (strain DSM 45986 / CECT 9034 / ACN14a).